Reading from the N-terminus, the 595-residue chain is Protein alan shepard (595 aa).

A compositionally biased stretch (pro residues) spans 1 to 12 (MHPRYSPAPPPH). The interval 1–82 (MHPRYSPAPP…ASVAAAPPTP (82 aa)) is disordered. Phosphotyrosine is present on Tyr5. Over residues 13-31 (QQQQQQQQQPMGGPHQQQS) the composition is skewed to low complexity. Gly residues predominate over residues 32-43 (AGGGPGHGGGAS). The segment covering 50–68 (PNSQQLPPQMPRSQNYANG) has biased composition (polar residues). Residues 69 to 78 (SSSAASVAAA) are compositionally biased toward low complexity. 2 positions are modified to phosphotyrosine: Tyr138 and Tyr154. The segment at 184–238 (RVPTAASPSNTNSSSSSNTGSQSGTLSTSLSNTTNTNTTMGPNGTAQNQNQQGGE) is disordered. Residues 190-238 (SPSNTNSSSSSNTGSQSGTLSTSLSNTTNTNTTMGPNGTAQNQNQQGGE) show a composition bias toward low complexity. 2 RRM domains span residues 243–316 (TNLY…MAKQ) and 322–401 (TNLY…FADG). The tract at residues 569 to 595 (MTDSEQASTAASPDEAYTQYPHQAAPK) is disordered.

In terms of biological role, has a role in the perception of gravity. The chain is Protein alan shepard from Drosophila virilis (Fruit fly).